A 361-amino-acid polypeptide reads, in one-letter code: tRNA-specific 2-thiouridylase MnmA (361 aa).

Residues 9-16 and M35 each bind ATP; that span reads GMSGGVDS. The tract at residues 95–97 is interaction with target base in tRNA; that stretch reads NPD. The active-site Nucleophile is C100. C100 and C196 are joined by a disulfide. Residue G124 coordinates ATP. An interaction with tRNA region spans residues 146 to 148; it reads KDQ. The Cysteine persulfide intermediate role is filled by C196. The interval 308–309 is interaction with tRNA; it reads RY.

It belongs to the MnmA/TRMU family.

The protein localises to the cytoplasm. It carries out the reaction S-sulfanyl-L-cysteinyl-[protein] + uridine(34) in tRNA + AH2 + ATP = 2-thiouridine(34) in tRNA + L-cysteinyl-[protein] + A + AMP + diphosphate + H(+). Functionally, catalyzes the 2-thiolation of uridine at the wobble position (U34) of tRNA, leading to the formation of s(2)U34. This chain is tRNA-specific 2-thiouridylase MnmA, found in Nitrosomonas eutropha (strain DSM 101675 / C91 / Nm57).